The sequence spans 457 residues: UDP-N-acetylmuramoyl-tripeptide--D-alanyl-D-alanine ligase (457 aa).

113 to 119 (GSNGKTT) is an ATP binding site.

The protein belongs to the MurCDEF family. MurF subfamily.

The protein resides in the cytoplasm. It catalyses the reaction D-alanyl-D-alanine + UDP-N-acetyl-alpha-D-muramoyl-L-alanyl-gamma-D-glutamyl-meso-2,6-diaminopimelate + ATP = UDP-N-acetyl-alpha-D-muramoyl-L-alanyl-gamma-D-glutamyl-meso-2,6-diaminopimeloyl-D-alanyl-D-alanine + ADP + phosphate + H(+). Its pathway is cell wall biogenesis; peptidoglycan biosynthesis. Its function is as follows. Involved in cell wall formation. Catalyzes the final step in the synthesis of UDP-N-acetylmuramoyl-pentapeptide, the precursor of murein. The chain is UDP-N-acetylmuramoyl-tripeptide--D-alanyl-D-alanine ligase from Bacillus subtilis (strain 168).